A 90-amino-acid chain; its full sequence is ATP synthase subunit e, mitochondrial (90 aa).

Ser-2 is subject to N-acetylserine. Residues 7–23 (VLRWSALGAGVVYGFVH) traverse the membrane as a helical segment.

As to quaternary structure, F-type ATP synthases have 2 components, the catalytic core F(1) and the membrane-embedded component F(0), linked together by a central stalk and a peripheral stalk. The central stalk, also called rotor shaft, is often seen as part of F(1). The peripheral stalk is seen as part of F(0). F(0) contains the membrane channel next to the rotor. F-type ATP synthases form dimers but each monomer functions independently in ATP generation. The dimer consists of 17 different polypeptides: ATP1 (subunit alpha, 3 molecules per monomer, part of F(1)), ATP2 (subunit beta, 3 copies per monomer, part of F(1)), ATP3 (subunit gamma, part of the central stalk), ATP4 (subunit b, part of the peripheral stalk), ATP5/OSCP (subunit 5/OSCP, part of the peripheral stalk), ATP6 (subunit a, part of the peripheral stalk), ATP7 (subunit d, part of the peripheral stalk), ATP8 (subunit 8, part of the peripheral stalk), OLI1 (subunit c, part of the rotor, 10 molecules per monomer), ATP14 (subunit h, part of the peripheral stalk), ATP15 (subunit epsilon, part of the central stalk), ATP16 (subunit delta, part of the central stalk), ATP17 (subunit f, part of the peripheral stalk), ATP18 (subunit i/j, part of the peripheral stalk), ATP19 (subunit k, dimer-specific, at interface between monomers), ATP20 (subunit g, at interface between monomers), TIM11 (subunit e, at interface between monomers).

Its subcellular location is the mitochondrion inner membrane. Functionally, mitochondrial membrane ATP synthase (F(1)F(0) ATP synthase or Complex V) produces ATP from ADP in the presence of a proton gradient across the membrane which is generated by electron transport complexes of the respiratory chain. F-type ATP synthases consist of two structural domains, F(1) - containing the extramembraneous catalytic core, and F(0) - containing the membrane proton channel, linked together by a central stalk and a peripheral stalk. During catalysis, ATP synthesis in the catalytic domain of F(1) is coupled via a rotary mechanism of the central stalk subunits to proton translocation. Part of the complex F(0) domain. Minor subunit located with subunit a/ATP6 in the membrane. Together with subunit g/ATP20, probably contributes to membrane curvature at the site of the ATP synthase dimer, ultimately contributing to formation of cristae. In Yarrowia lipolytica (strain CLIB 122 / E 150) (Yeast), this protein is ATP synthase subunit e, mitochondrial.